The primary structure comprises 115 residues: NAD(P)H-quinone oxidoreductase subunit M, organellar chromatophore (115 aa).

It belongs to the complex I NdhM subunit family. NDH-1 can be composed of about 15 different subunits; different subcomplexes with different compositions have been identified which probably have different functions.

It is found in the plastid. The protein localises to the organellar chromatophore thylakoid membrane. It catalyses the reaction a plastoquinone + NADH + (n+1) H(+)(in) = a plastoquinol + NAD(+) + n H(+)(out). It carries out the reaction a plastoquinone + NADPH + (n+1) H(+)(in) = a plastoquinol + NADP(+) + n H(+)(out). In terms of biological role, NDH-1 shuttles electrons from an unknown electron donor, via FMN and iron-sulfur (Fe-S) centers, to quinones in the respiratory and/or the photosynthetic chain. The immediate electron acceptor for the enzyme in this species is believed to be plastoquinone. Couples the redox reaction to proton translocation, and thus conserves the redox energy in a proton gradient. This is NAD(P)H-quinone oxidoreductase subunit M, organellar chromatophore from Paulinella chromatophora.